The sequence spans 189 residues: Pyridoxal 5'-phosphate synthase subunit PdxT (189 aa).

47 to 49 (GES) contacts L-glutamine. C79 functions as the Nucleophile in the catalytic mechanism. Residues R106 and 135–136 (IR) each bind L-glutamine. Residues H171 and E173 each act as charge relay system in the active site.

It belongs to the glutaminase PdxT/SNO family. In terms of assembly, in the presence of PdxS, forms a dodecamer of heterodimers. Only shows activity in the heterodimer.

It carries out the reaction aldehydo-D-ribose 5-phosphate + D-glyceraldehyde 3-phosphate + L-glutamine = pyridoxal 5'-phosphate + L-glutamate + phosphate + 3 H2O + H(+). The catalysed reaction is L-glutamine + H2O = L-glutamate + NH4(+). It functions in the pathway cofactor biosynthesis; pyridoxal 5'-phosphate biosynthesis. Its function is as follows. Catalyzes the hydrolysis of glutamine to glutamate and ammonia as part of the biosynthesis of pyridoxal 5'-phosphate. The resulting ammonia molecule is channeled to the active site of PdxS. This chain is Pyridoxal 5'-phosphate synthase subunit PdxT, found in Desulforudis audaxviator (strain MP104C).